We begin with the raw amino-acid sequence, 325 residues long: Holliday junction branch migration complex subunit RuvB (325 aa).

The large ATPase domain (RuvB-L) stretch occupies residues Met-1 to Tyr-180. Residues Leu-19, Arg-20, Gly-61, Lys-64, Thr-65, Thr-66, Glu-127–Phe-129, Arg-170, Tyr-180, and Arg-217 contribute to the ATP site. Thr-65 is a binding site for Mg(2+). A small ATPAse domain (RuvB-S) region spans residues Ser-181–Gly-251. Residues Lys-254–His-325 are head domain (RuvB-H). Residues Arg-290, Arg-309, and Arg-314 each coordinate DNA.

Belongs to the RuvB family. In terms of assembly, homohexamer. Forms an RuvA(8)-RuvB(12)-Holliday junction (HJ) complex. HJ DNA is sandwiched between 2 RuvA tetramers; dsDNA enters through RuvA and exits via RuvB. An RuvB hexamer assembles on each DNA strand where it exits the tetramer. Each RuvB hexamer is contacted by two RuvA subunits (via domain III) on 2 adjacent RuvB subunits; this complex drives branch migration. In the full resolvosome a probable DNA-RuvA(4)-RuvB(12)-RuvC(2) complex forms which resolves the HJ.

The protein localises to the cytoplasm. It carries out the reaction ATP + H2O = ADP + phosphate + H(+). In terms of biological role, the RuvA-RuvB-RuvC complex processes Holliday junction (HJ) DNA during genetic recombination and DNA repair, while the RuvA-RuvB complex plays an important role in the rescue of blocked DNA replication forks via replication fork reversal (RFR). RuvA specifically binds to HJ cruciform DNA, conferring on it an open structure. The RuvB hexamer acts as an ATP-dependent pump, pulling dsDNA into and through the RuvAB complex. RuvB forms 2 homohexamers on either side of HJ DNA bound by 1 or 2 RuvA tetramers; 4 subunits per hexamer contact DNA at a time. Coordinated motions by a converter formed by DNA-disengaged RuvB subunits stimulates ATP hydrolysis and nucleotide exchange. Immobilization of the converter enables RuvB to convert the ATP-contained energy into a lever motion, pulling 2 nucleotides of DNA out of the RuvA tetramer per ATP hydrolyzed, thus driving DNA branch migration. The RuvB motors rotate together with the DNA substrate, which together with the progressing nucleotide cycle form the mechanistic basis for DNA recombination by continuous HJ branch migration. Branch migration allows RuvC to scan DNA until it finds its consensus sequence, where it cleaves and resolves cruciform DNA. The protein is Holliday junction branch migration complex subunit RuvB of Orientia tsutsugamushi (strain Ikeda) (Rickettsia tsutsugamushi).